The chain runs to 780 residues: 5-methyltetrahydropteroyltriglutamate--homocysteine methyltransferase (780 aa).

5-methyltetrahydropteroyltri-L-glutamate-binding positions include 15 to 18 and Lys114; that span reads RELK. Residues 457 to 459 and Glu510 contribute to the L-homocysteine site; that span reads IGS. Residues 457–459 and Glu510 each bind L-methionine; that span reads IGS. 5-methyltetrahydropteroyltri-L-glutamate contacts are provided by residues 541 to 542 and Trp587; that span reads RC. Asp625 provides a ligand contact to L-homocysteine. Asp625 serves as a coordination point for L-methionine. Position 631 (Glu631) interacts with 5-methyltetrahydropteroyltri-L-glutamate. Zn(2+)-binding residues include His667, Cys669, and Glu691. The active-site Proton donor is the His720. Cys752 contributes to the Zn(2+) binding site.

Belongs to the vitamin-B12 independent methionine synthase family. Zn(2+) is required as a cofactor.

It catalyses the reaction 5-methyltetrahydropteroyltri-L-glutamate + L-homocysteine = tetrahydropteroyltri-L-glutamate + L-methionine. It participates in amino-acid biosynthesis; L-methionine biosynthesis via de novo pathway; L-methionine from L-homocysteine (MetE route): step 1/1. Its function is as follows. Catalyzes the transfer of a methyl group from 5-methyltetrahydrofolate to homocysteine resulting in methionine formation. This is 5-methyltetrahydropteroyltriglutamate--homocysteine methyltransferase from Nitratidesulfovibrio vulgaris (strain DSM 19637 / Miyazaki F) (Desulfovibrio vulgaris).